Consider the following 324-residue polypeptide: Probable UDP-sugar transporter protein SLC35A4 (324 aa).

Residues M1–R18 are Cytoplasmic-facing. Residues W19 to L39 traverse the membrane as a helical segment. Topologically, residues C40–S52 are lumenal. A helical transmembrane segment spans residues A53–W73. The Cytoplasmic segment spans residues Q74 to Q85. A helical transmembrane segment spans residues A86 to L106. Topologically, residues Q107–Q142 are lumenal. The helical transmembrane segment at G143 to E163 threads the bilayer. The Cytoplasmic segment spans residues P164–M180. A helical transmembrane segment spans residues P181–L201. Topologically, residues S202–R214 are lumenal. Residues L215–L235 traverse the membrane as a helical segment. Topologically, residues Y236–G248 are cytoplasmic. The helical transmembrane segment at F249–M271 threads the bilayer. Over K272–R279 the chain is Lumenal. A helical membrane pass occupies residues L280–L300. At Q301–P324 the chain is on the cytoplasmic side.

This sequence belongs to the nucleotide-sugar transporter family. SLC35A subfamily. Found in a complex with SLC35A2 and SLC35A3. As to expression, expressed in the kidney, lung, testis, and prostate. Expressed in the brain by sets of neurons, such as the pyramidal cells of the cortex, the Purkinje cells of the cerebellum, and the motoneurons of the brainstem.

Its subcellular location is the golgi apparatus membrane. The enzyme catalyses CDP-L-ribitol(in) + CDP(out) = CDP-L-ribitol(out) + CDP(in). In terms of biological role, mediates the transport of CDP-ribitol. Does not exhibit CMP-sialic acid, UDP-galactose and UDP-N-acetylglucosamine transport activity. This Rattus norvegicus (Rat) protein is Probable UDP-sugar transporter protein SLC35A4.